A 185-amino-acid chain; its full sequence is Large ribosomal subunit protein uL5 (185 aa).

The protein belongs to the universal ribosomal protein uL5 family. In terms of assembly, part of the 50S ribosomal subunit; part of the 5S rRNA/L5/L18/L25 subcomplex. Contacts the 5S rRNA and the P site tRNA. Forms a bridge to the 30S subunit in the 70S ribosome.

Its function is as follows. This is one of the proteins that bind and probably mediate the attachment of the 5S RNA into the large ribosomal subunit, where it forms part of the central protuberance. In the 70S ribosome it contacts protein S13 of the 30S subunit (bridge B1b), connecting the 2 subunits; this bridge is implicated in subunit movement. Contacts the P site tRNA; the 5S rRNA and some of its associated proteins might help stabilize positioning of ribosome-bound tRNAs. The polypeptide is Large ribosomal subunit protein uL5 (Phocaeicola vulgatus (strain ATCC 8482 / DSM 1447 / JCM 5826 / CCUG 4940 / NBRC 14291 / NCTC 11154) (Bacteroides vulgatus)).